The chain runs to 328 residues: Cell division protein ZipA (328 aa).

Residues 1–6 (MMQDLR) are Periplasmic-facing. A helical membrane pass occupies residues 7–27 (LILIVVGAIAIIALLLHGLWT). The Cytoplasmic portion of the chain corresponds to 28-328 (SRKERSSLFR…REVLDANTIA (301 aa)). Over residues 61–72 (GEVRVRTSHPQE) the composition is skewed to basic and acidic residues. Residues 61–183 (GEVRVRTSHP…EPVAPAPEAK (123 aa)) are disordered. 2 stretches are compositionally biased toward polar residues: residues 95-104 (KSAQVKTASR) and 164-174 (APQQHVESQQE).

It belongs to the ZipA family. Interacts with FtsZ via their C-terminal domains.

Its subcellular location is the cell inner membrane. Functionally, essential cell division protein that stabilizes the FtsZ protofilaments by cross-linking them and that serves as a cytoplasmic membrane anchor for the Z ring. Also required for the recruitment to the septal ring of downstream cell division proteins. This Yersinia pestis bv. Antiqua (strain Antiqua) protein is Cell division protein ZipA.